A 391-amino-acid polypeptide reads, in one-letter code: Formate-dependent phosphoribosylglycinamide formyltransferase (391 aa).

Residues 20-21 (EL) and Glu-80 contribute to the N(1)-(5-phospho-beta-D-ribosyl)glycinamide site. Residues Arg-112, Lys-153, 158-163 (SSGKGQ), 193-196 (EGFI), and Glu-201 each bind ATP. One can recognise an ATP-grasp domain in the interval 117–306 (RLAAETLGLP…EFALHVRAIL (190 aa)). 2 residues coordinate Mg(2+): Glu-265 and Glu-277. Residues Asp-284, Lys-354, and 361–362 (RR) contribute to the N(1)-(5-phospho-beta-D-ribosyl)glycinamide site.

Belongs to the PurK/PurT family. As to quaternary structure, homodimer.

The catalysed reaction is N(1)-(5-phospho-beta-D-ribosyl)glycinamide + formate + ATP = N(2)-formyl-N(1)-(5-phospho-beta-D-ribosyl)glycinamide + ADP + phosphate + H(+). It functions in the pathway purine metabolism; IMP biosynthesis via de novo pathway; N(2)-formyl-N(1)-(5-phospho-D-ribosyl)glycinamide from N(1)-(5-phospho-D-ribosyl)glycinamide (formate route): step 1/1. Its function is as follows. Involved in the de novo purine biosynthesis. Catalyzes the transfer of formate to 5-phospho-ribosyl-glycinamide (GAR), producing 5-phospho-ribosyl-N-formylglycinamide (FGAR). Formate is provided by PurU via hydrolysis of 10-formyl-tetrahydrofolate. The protein is Formate-dependent phosphoribosylglycinamide formyltransferase of Shewanella sp. (strain MR-7).